Here is a 193-residue protein sequence, read N- to C-terminus: Dirigent protein (193 aa).

The N-terminal stretch at 1 to 29 is a signal peptide; that stretch reads MGGEKAFSFIFLLFLCFFLANLSASSAHP. Residues cysteine 40 and cysteine 192 are joined by a disulfide bond. Asparagine 59 and asparagine 129 each carry an N-linked (GlcNAc...) asparagine glycan.

It belongs to the plant dirigent protein family. As to quaternary structure, homodimer. As to expression, expressed in rhizomes, stems, and leaves.

It is found in the secreted. The protein localises to the extracellular space. It localises to the apoplast. It participates in aromatic compound metabolism; phenylpropanoid biosynthesis. Its function is as follows. Dirigent proteins impart stereoselectivity on the phenoxy radical-coupling reaction, yielding optically active lignans from two molecules of coniferyl alcohol in the biosynthesis of lignans, flavonolignans, and alkaloids and thus plays a central role in plant secondary metabolism. Also involved in the biosynthesis of etoposide, a chemotherapeutic compound of the topoisomerase inhibitor family. The protein is Dirigent protein of Sinopodophyllum hexandrum (Himalayan may apple).